We begin with the raw amino-acid sequence, 379 residues long: 1-deoxy-D-xylulose 5-phosphate reductoisomerase (379 aa).

NADPH-binding residues include T10, G11, S12, I13, R38, N39, and N121. Residue K122 coordinates 1-deoxy-D-xylulose 5-phosphate. Position 123 (E123) interacts with NADPH. D147 lines the Mn(2+) pocket. 1-deoxy-D-xylulose 5-phosphate is bound by residues S148, E149, S173, and H196. E149 contacts Mn(2+). An NADPH-binding site is contributed by G202. 1-deoxy-D-xylulose 5-phosphate is bound by residues S209, N214, K215, and E218. E218 is a binding site for Mn(2+).

It belongs to the DXR family. Requires Mg(2+) as cofactor. It depends on Mn(2+) as a cofactor.

It catalyses the reaction 2-C-methyl-D-erythritol 4-phosphate + NADP(+) = 1-deoxy-D-xylulose 5-phosphate + NADPH + H(+). It functions in the pathway isoprenoid biosynthesis; isopentenyl diphosphate biosynthesis via DXP pathway; isopentenyl diphosphate from 1-deoxy-D-xylulose 5-phosphate: step 1/6. Its function is as follows. Catalyzes the NADPH-dependent rearrangement and reduction of 1-deoxy-D-xylulose-5-phosphate (DXP) to 2-C-methyl-D-erythritol 4-phosphate (MEP). The polypeptide is 1-deoxy-D-xylulose 5-phosphate reductoisomerase (Chlamydia muridarum (strain MoPn / Nigg)).